We begin with the raw amino-acid sequence, 162 residues long: Crossover junction endodeoxyribonuclease RuvC (162 aa).

Residues D8, E69, and H141 contribute to the active site. Mg(2+) is bound by residues D8, E69, and H141.

It belongs to the RuvC family. As to quaternary structure, homodimer which binds Holliday junction (HJ) DNA. The HJ becomes 2-fold symmetrical on binding to RuvC with unstacked arms; it has a different conformation from HJ DNA in complex with RuvA. In the full resolvosome a probable DNA-RuvA(4)-RuvB(12)-RuvC(2) complex forms which resolves the HJ. It depends on Mg(2+) as a cofactor.

Its subcellular location is the cytoplasm. The enzyme catalyses Endonucleolytic cleavage at a junction such as a reciprocal single-stranded crossover between two homologous DNA duplexes (Holliday junction).. The RuvA-RuvB-RuvC complex processes Holliday junction (HJ) DNA during genetic recombination and DNA repair. Endonuclease that resolves HJ intermediates. Cleaves cruciform DNA by making single-stranded nicks across the HJ at symmetrical positions within the homologous arms, yielding a 5'-phosphate and a 3'-hydroxyl group; requires a central core of homology in the junction. The consensus cleavage sequence is 5'-(A/T)TT(C/G)-3'. Cleavage occurs on the 3'-side of the TT dinucleotide at the point of strand exchange. HJ branch migration catalyzed by RuvA-RuvB allows RuvC to scan DNA until it finds its consensus sequence, where it cleaves and resolves the cruciform DNA. The protein is Crossover junction endodeoxyribonuclease RuvC of Wolbachia pipientis wMel.